The chain runs to 211 residues: MIYLKYNCPLTYLILLKLEGGKTVEEKTDAEQRNATSEEDTEIFENPGEGLEKATFAAGCFWGIEEAFRQIKGVVATAVGYSGGHFKRPTYEQVCTLDTGHAEAVRVIFDPEIVSYKTLLDVFWKIHDPTTKDRQGPDVGKQYRSVIFYHSDEQKAAALASKEELEKSGAFKNPVVTEIVPVSEFYMAEDYHQQYFEKKGFLQNIFRSFKK.

Cys-60 is a catalytic residue.

It belongs to the MsrA Met sulfoxide reductase family.

It carries out the reaction L-methionyl-[protein] + [thioredoxin]-disulfide + H2O = L-methionyl-(S)-S-oxide-[protein] + [thioredoxin]-dithiol. The catalysed reaction is [thioredoxin]-disulfide + L-methionine + H2O = L-methionine (S)-S-oxide + [thioredoxin]-dithiol. In terms of biological role, has an important function as a repair enzyme for proteins that have been inactivated by oxidation. Catalyzes the reversible oxidation-reduction of methionine sulfoxide in proteins to methionine. The protein is Peptide methionine sulfoxide reductase MsrA of Methanosarcina mazei (strain ATCC BAA-159 / DSM 3647 / Goe1 / Go1 / JCM 11833 / OCM 88) (Methanosarcina frisia).